Here is a 158-residue protein sequence, read N- to C-terminus: Cyclic pyranopterin monophosphate synthase (158 aa).

Substrate contacts are provided by residues 75 to 77 (LCH) and 113 to 114 (ME). Residue aspartate 128 is part of the active site.

This sequence belongs to the MoaC family. Homohexamer; trimer of dimers.

The enzyme catalyses (8S)-3',8-cyclo-7,8-dihydroguanosine 5'-triphosphate = cyclic pyranopterin phosphate + diphosphate. The protein operates within cofactor biosynthesis; molybdopterin biosynthesis. Its function is as follows. Catalyzes the conversion of (8S)-3',8-cyclo-7,8-dihydroguanosine 5'-triphosphate to cyclic pyranopterin monophosphate (cPMP). The polypeptide is Cyclic pyranopterin monophosphate synthase (Mannheimia succiniciproducens (strain KCTC 0769BP / MBEL55E)).